A 243-amino-acid chain; its full sequence is DNA repair protein RecO (243 aa).

Belongs to the RecO family.

In terms of biological role, involved in DNA repair and RecF pathway recombination. The protein is DNA repair protein RecO of Azoarcus sp. (strain BH72).